A 432-amino-acid chain; its full sequence is C4-dicarboxylate transport protein (432 aa).

The next 8 membrane-spanning stretches (helical) occupy residues 8 to 28, 44 to 64, 78 to 98, 148 to 168, 188 to 208, 222 to 242, 307 to 327, and 355 to 375; these read ILYV…HYWP, LIKM…IAGM, LLYF…AAHL, GDIL…AVLG, IVHV…AFTI, LIGT…GTIA, IYMT…LTLM, and AATL…ILGI.

Belongs to the dicarboxylate/amino acid:cation symporter (DAACS) (TC 2.A.23) family.

The protein resides in the cell inner membrane. Responsible for the transport of dicarboxylates such as succinate, fumarate, and malate from the periplasm across the membrane. This is C4-dicarboxylate transport protein from Cupriavidus necator (strain ATCC 17699 / DSM 428 / KCTC 22496 / NCIMB 10442 / H16 / Stanier 337) (Ralstonia eutropha).